Consider the following 301-residue polypeptide: Prohibitin-2 (301 aa).

2 necessary for transcriptional repression regions span residues 19–49 (VGTA…GQRA) and 150–174 (ASQL…RAKD). Positions 190–237 (SREYTAAVEAKQVAQQEAQRAQFLVEKAKQEQKQKIVQAEGEATAAKM) form a coiled coil.

It belongs to the prohibitin family. The mitochondrial prohibitin complex consists of two subunits (PHB1 and PHB2), assembled into a membrane-associated ring-shaped supercomplex of approximately 1 mDa.

The protein localises to the mitochondrion inner membrane. It is found in the cytoplasm. The protein resides in the nucleus. It localises to the cell membrane. Its function is as follows. Protein with pleiotropic attributes mediated in a cell-compartment- and tissue-specific manner, which include the plasma membrane-associated cell signaling functions, mitochondrial chaperone, and transcriptional co-regulator of transcription factors and sex steroid hormones in the nucleus. In the mitochondria, together with PHB, forms large ring complexes (prohibitin complexes) in the inner mitochondrial membrane (IMM) and functions as a chaperone protein that stabilizes mitochondrial respiratory enzymes and maintains mitochondrial integrity in the IMM, which is required for mitochondrial morphogenesis, neuronal survival, and normal lifespan. Functionally, in the nucleus, serves as transcriptional co-regulator. This chain is Prohibitin-2 (PHB2), found in Gallus gallus (Chicken).